We begin with the raw amino-acid sequence, 254 residues long: Small ribosomal subunit protein uS2 (254 aa).

Belongs to the universal ribosomal protein uS2 family.

The sequence is that of Small ribosomal subunit protein uS2 from Legionella pneumophila subsp. pneumophila (strain Philadelphia 1 / ATCC 33152 / DSM 7513).